The sequence spans 1075 residues: DNA-directed RNA polymerase subunit beta (1075 aa).

Belongs to the RNA polymerase beta chain family. In plastids the minimal PEP RNA polymerase catalytic core is composed of four subunits: alpha, beta, beta', and beta''. When a (nuclear-encoded) sigma factor is associated with the core the holoenzyme is formed, which can initiate transcription.

It localises to the plastid. The protein localises to the chloroplast. The catalysed reaction is RNA(n) + a ribonucleoside 5'-triphosphate = RNA(n+1) + diphosphate. DNA-dependent RNA polymerase catalyzes the transcription of DNA into RNA using the four ribonucleoside triphosphates as substrates. This chain is DNA-directed RNA polymerase subunit beta, found in Sorghum bicolor (Sorghum).